The primary structure comprises 218 residues: Adenylate kinase (218 aa).

12 to 17 (GAGKGT) serves as a coordination point for ATP. The segment at 32-61 (STGDIFRKNISENTPLGIEAKSYMDNGQLV) is NMP. Residues Thr33, Arg38, 59–61 (QLV), 87–90 (GFPR), and Gln94 each bind AMP. An LID region spans residues 128–165 (GRRVCPSCGASYHIKFNPPTNDGKCDLCGSDVIQRKDD). Arg129 lines the ATP pocket. Residues Cys132 and Cys135 each contribute to the Zn(2+) site. 138 to 139 (SY) provides a ligand contact to ATP. Cys152 and Cys155 together coordinate Zn(2+). 2 residues coordinate AMP: Arg162 and Arg173. Residue Gln201 coordinates ATP.

It belongs to the adenylate kinase family. As to quaternary structure, monomer.

The protein localises to the cytoplasm. The enzyme catalyses AMP + ATP = 2 ADP. It functions in the pathway purine metabolism; AMP biosynthesis via salvage pathway; AMP from ADP: step 1/1. Its function is as follows. Catalyzes the reversible transfer of the terminal phosphate group between ATP and AMP. Plays an important role in cellular energy homeostasis and in adenine nucleotide metabolism. This Clostridium perfringens (strain 13 / Type A) protein is Adenylate kinase.